A 251-amino-acid chain; its full sequence is DNA repair protein RecO (251 aa).

It belongs to the RecO family.

Involved in DNA repair and RecF pathway recombination. The polypeptide is DNA repair protein RecO (Nitratidesulfovibrio vulgaris (strain ATCC 29579 / DSM 644 / CCUG 34227 / NCIMB 8303 / VKM B-1760 / Hildenborough) (Desulfovibrio vulgaris)).